Consider the following 660-residue polypeptide: tRNA 5-methylaminomethyl-2-thiouridine biosynthesis bifunctional protein MnmC (660 aa).

A tRNA (mnm(5)s(2)U34)-methyltransferase region spans residues 1–235; it reads MTITRHARID…KWEVLRGTFI (235 aa). The tract at residues 266–660 is FAD-dependent cmnm(5)s(2)U34 oxidoreductase; sequence IGAGLAGCAT…LRGLIRGGGK (395 aa).

In the N-terminal section; belongs to the methyltransferase superfamily. tRNA (mnm(5)s(2)U34)-methyltransferase family. The protein in the C-terminal section; belongs to the DAO family. The cofactor is FAD.

Its subcellular location is the cytoplasm. The enzyme catalyses 5-aminomethyl-2-thiouridine(34) in tRNA + S-adenosyl-L-methionine = 5-methylaminomethyl-2-thiouridine(34) in tRNA + S-adenosyl-L-homocysteine + H(+). In terms of biological role, catalyzes the last two steps in the biosynthesis of 5-methylaminomethyl-2-thiouridine (mnm(5)s(2)U) at the wobble position (U34) in tRNA. Catalyzes the FAD-dependent demodification of cmnm(5)s(2)U34 to nm(5)s(2)U34, followed by the transfer of a methyl group from S-adenosyl-L-methionine to nm(5)s(2)U34, to form mnm(5)s(2)U34. The sequence is that of tRNA 5-methylaminomethyl-2-thiouridine biosynthesis bifunctional protein MnmC from Pseudomonas savastanoi pv. phaseolicola (strain 1448A / Race 6) (Pseudomonas syringae pv. phaseolicola (strain 1448A / Race 6)).